The primary structure comprises 365 residues: Peptide chain release factor 2 (365 aa).

Gln-252 carries the post-translational modification N5-methylglutamine.

The protein belongs to the prokaryotic/mitochondrial release factor family. In terms of processing, methylated by PrmC. Methylation increases the termination efficiency of RF2.

The protein resides in the cytoplasm. In terms of biological role, peptide chain release factor 2 directs the termination of translation in response to the peptide chain termination codons UGA and UAA. The chain is Peptide chain release factor 2 from Pasteurella multocida (strain Pm70).